Here is a 186-residue protein sequence, read N- to C-terminus: Putative manganese efflux pump MntP (186 aa).

6 consecutive transmembrane segments (helical) span residues 1–21 (MSFLTNFLLGLGLAMDAFAVS), 41–61 (VFFGGFQALMPVLGWVGGSAV), 62–82 (SGFVSDYAPWIAFGLLAFIGG), 105–127 (LFLLAVATSIDALAVGISFAFLG), 139–159 (CVTFVMSFCGAVLGYRIGHFF), and 163–183 (VEILGGLILIGLGVKILAEHM).

Belongs to the MntP (TC 9.B.29) family.

It is found in the cell membrane. In terms of biological role, probably functions as a manganese efflux pump. The polypeptide is Putative manganese efflux pump MntP (Methanosarcina mazei (strain ATCC BAA-159 / DSM 3647 / Goe1 / Go1 / JCM 11833 / OCM 88) (Methanosarcina frisia)).